A 325-amino-acid chain; its full sequence is Beta-ketoacyl-[acyl-carrier-protein] synthase III (325 aa).

Residues C116 and H252 contribute to the active site. An ACP-binding region spans residues 253–257 (QANLR). N282 is a catalytic residue.

It belongs to the thiolase-like superfamily. FabH family. In terms of assembly, homodimer.

The protein localises to the cytoplasm. The catalysed reaction is malonyl-[ACP] + acetyl-CoA + H(+) = 3-oxobutanoyl-[ACP] + CO2 + CoA. Its pathway is lipid metabolism; fatty acid biosynthesis. Catalyzes the condensation reaction of fatty acid synthesis by the addition to an acyl acceptor of two carbons from malonyl-ACP. Catalyzes the first condensation reaction which initiates fatty acid synthesis and may therefore play a role in governing the total rate of fatty acid production. Possesses both acetoacetyl-ACP synthase and acetyl transacylase activities. Its substrate specificity determines the biosynthesis of branched-chain and/or straight-chain of fatty acids. The protein is Beta-ketoacyl-[acyl-carrier-protein] synthase III of Xanthomonas oryzae pv. oryzae (strain MAFF 311018).